The primary structure comprises 222 residues: Putative O-methyltransferase MAP_2558 (222 aa).

S-adenosyl-L-methionine-binding positions include valine 49, glutamate 71, glycine 73–threonine 74, serine 79, aspartate 97, and isoleucine 98. Residue aspartate 145 participates in substrate binding. Aspartate 147 contacts S-adenosyl-L-methionine.

It belongs to the class I-like SAM-binding methyltransferase superfamily. Cation-dependent O-methyltransferase family.

In Mycolicibacterium paratuberculosis (strain ATCC BAA-968 / K-10) (Mycobacterium paratuberculosis), this protein is Putative O-methyltransferase MAP_2558.